The primary structure comprises 237 residues: Ribose-5-phosphate isomerase A (237 aa).

Substrate is bound by residues 30–33, 87–90, and 100–103; these read SGST, DGAD, and KGGG. Residue glutamate 109 is the Proton acceptor of the active site. A substrate-binding site is contributed by lysine 127.

The protein belongs to the ribose 5-phosphate isomerase family. Homodimer.

It catalyses the reaction aldehydo-D-ribose 5-phosphate = D-ribulose 5-phosphate. Its pathway is carbohydrate degradation; pentose phosphate pathway; D-ribose 5-phosphate from D-ribulose 5-phosphate (non-oxidative stage): step 1/1. Its function is as follows. Catalyzes the reversible conversion of ribose-5-phosphate to ribulose 5-phosphate. This is Ribose-5-phosphate isomerase A from Prochlorococcus marinus (strain SARG / CCMP1375 / SS120).